The primary structure comprises 154 residues: MSELELAFQHVAGASAPEAERVQAWLEPVFEAHGRGGELTVRIVDEDESRALNRDYRGRDKPTNVLSFPCELPPGLPAEAAQILGDLVVCAPVVAREAAEQGKPEADHWAHMLVHGALHLLGYDHEDPAQAERMEAEERRILAALGVPDPYQER.

The Zn(2+) site is built by histidine 115, histidine 119, and histidine 125.

It belongs to the endoribonuclease YbeY family. Requires Zn(2+) as cofactor.

The protein resides in the cytoplasm. In terms of biological role, single strand-specific metallo-endoribonuclease involved in late-stage 70S ribosome quality control and in maturation of the 3' terminus of the 16S rRNA. The sequence is that of Endoribonuclease YbeY from Halorhodospira halophila (strain DSM 244 / SL1) (Ectothiorhodospira halophila (strain DSM 244 / SL1)).